Here is a 217-residue protein sequence, read N- to C-terminus: MDASDRSMAVKRMEMVQSLRQKGLVNERVLDAMQRIERHRFVDRESSVSAYEDSAYPIGYGQTISQPYTVAYMTTLLLERCPPPGKVLEIGTGSGYQAAILDALGYRVYSVERIPELHDRVVGLFRSLGLAISCRVGDGSLGWEEEAPFDGIMVTAAAPRCPEHLLEQLGDNGCLVIPVGEHNMQQMTVYRRVGERFEKELFHHFAFVPLIGREGWN.

Ser65 is an active-site residue.

This sequence belongs to the methyltransferase superfamily. L-isoaspartyl/D-aspartyl protein methyltransferase family.

Its subcellular location is the cytoplasm. The enzyme catalyses [protein]-L-isoaspartate + S-adenosyl-L-methionine = [protein]-L-isoaspartate alpha-methyl ester + S-adenosyl-L-homocysteine. Catalyzes the methyl esterification of L-isoaspartyl residues in peptides and proteins that result from spontaneous decomposition of normal L-aspartyl and L-asparaginyl residues. It plays a role in the repair and/or degradation of damaged proteins. The sequence is that of Protein-L-isoaspartate O-methyltransferase from Chlorobium limicola (strain DSM 245 / NBRC 103803 / 6330).